The primary structure comprises 392 residues: HORMA domain-containing protein 1 (392 aa).

An HORMA domain is found at His25–Val227. The interval Ser323–Arg359 is disordered. A compositionally biased stretch (polar residues) spans Lys341–Ser353. At Ser375 the chain carries Phosphoserine. The Nuclear localization signal motif lies at Lys381–Arg384.

As to quaternary structure, interacts with HORMAD2. Interacts with IHO1. Phosphorylated at Ser-375 in a SPO11-dependent manner. As to expression, specifically expressed in meiotic germ cells.

Its subcellular location is the nucleus. It is found in the chromosome. It localises to the cytoplasm. Functionally, plays a key role in meiotic progression. Regulates 3 different functions during meiosis: ensures that sufficient numbers of processed DNA double-strand breaks (DSBs) are available for successful homology search by increasing the steady-state numbers of single-stranded DSB ends. Promotes synaptonemal-complex formation independently of its role in homology search. Plays a key role in the male mid-pachytene checkpoint and the female meiotic prophase checkpoint: required for efficient build-up of ATR activity on unsynapsed chromosome regions, a process believed to form the basis of meiotic silencing of unsynapsed chromatin (MSUC) and meiotic prophase quality control in both sexes. This Mus musculus (Mouse) protein is HORMA domain-containing protein 1.